Consider the following 360-residue polypeptide: Putative transcription factor A494R (360 aa).

The segment at 153–175 is a zinc-finger region; the sequence is CTCGGQMELWVNSTQSDLVCNEC.

This sequence belongs to the nucleo-cytoplasmic large DNA viruses (NCLDVs) VLTF-3 family.

Putative transcription factor. This Paramecium bursaria Chlorella virus 1 (PBCV-1) protein is Putative transcription factor A494R.